Here is a 90-residue protein sequence, read N- to C-terminus: Large ribosomal subunit protein uL23c (90 aa).

Belongs to the universal ribosomal protein uL23 family. As to quaternary structure, part of the 50S ribosomal subunit.

It is found in the plastid. Its subcellular location is the chloroplast. Binds to 23S rRNA. In Psilotum nudum (Whisk fern), this protein is Large ribosomal subunit protein uL23c (rpl23).